A 471-amino-acid chain; its full sequence is UDP-N-acetylmuramate--L-alanine ligase (471 aa).

An ATP-binding site is contributed by 125-131 (GTHGKTT).

The protein belongs to the MurCDEF family.

Its subcellular location is the cytoplasm. It catalyses the reaction UDP-N-acetyl-alpha-D-muramate + L-alanine + ATP = UDP-N-acetyl-alpha-D-muramoyl-L-alanine + ADP + phosphate + H(+). The protein operates within cell wall biogenesis; peptidoglycan biosynthesis. Its function is as follows. Cell wall formation. The protein is UDP-N-acetylmuramate--L-alanine ligase of Kineococcus radiotolerans (strain ATCC BAA-149 / DSM 14245 / SRS30216).